We begin with the raw amino-acid sequence, 143 residues long: Hemoglobin cathodic subunit alpha (143 aa).

Ser1 is subject to N-acetylserine. One can recognise a Globin domain in the interval 1-143 (SLAPGDKTVV…VCAALSDKYR (143 aa)). O2 is bound at residue His59. His89 contacts heme b.

The protein belongs to the globin family. In terms of assembly, heterotetramer of two alpha chains and two beta chains. As to expression, red blood cells.

Its function is as follows. Involved in oxygen transport from gills to the various peripheral tissues. This chain is Hemoglobin cathodic subunit alpha, found in Gymnothorax unicolor (Brown moray).